Here is a 178-residue protein sequence, read N- to C-terminus: Large ribosomal subunit protein uL6 (178 aa).

Belongs to the universal ribosomal protein uL6 family. In terms of assembly, part of the 50S ribosomal subunit.

In terms of biological role, this protein binds to the 23S rRNA, and is important in its secondary structure. It is located near the subunit interface in the base of the L7/L12 stalk, and near the tRNA binding site of the peptidyltransferase center. The chain is Large ribosomal subunit protein uL6 from Corynebacterium glutamicum (strain R).